The chain runs to 229 residues: MYDISGWKHVFKLDPNKELSDEHLEMICESGTDAVIVGGSDGVTIDNVLHMLVSIRRYAVPCVLEVSDVEAITPGFDFYYIPSVLNSRKVEWVTGVHHEALKEFGDIMDWDEIFMEGYCVLNPEAKVAQLTEAKCDLTEDDVIAYARLADKLLHLPIFYLEYSGTYGDVELVKNVKAELKQAKLYYGGGISNAEQAKEMAQYADTVVVGNIIYDDIKSALKTVKAVKGE.

K12 lines the sn-glycerol 1-phosphate pocket. Positions 14 and 40 each coordinate Mg(2+). Residues 159-164 (YLEYSG), G189, and 209-210 (GN) contribute to the sn-glycerol 1-phosphate site.

It belongs to the GGGP/HepGP synthase family. Group I subfamily. Homodimer. Mg(2+) is required as a cofactor.

It catalyses the reaction sn-glycerol 1-phosphate + all-trans-heptaprenyl diphosphate = 3-heptaprenyl-sn-glycero-1-phosphate + diphosphate. Its pathway is membrane lipid metabolism; glycerophospholipid metabolism. Prenyltransferase that catalyzes in vivo the transfer of the heptaprenyl moiety of heptaprenyl pyrophosphate (HepPP; 35 carbon atoms) to the C3 hydroxyl of sn-glycerol-1-phosphate (G1P), producing heptaprenylglyceryl phosphate (HepGP). This reaction is an ether-bond-formation step in the biosynthesis of archaea-type G1P-based membrane lipids found in Bacillales. This Bacillus cereus (strain ATCC 14579 / DSM 31 / CCUG 7414 / JCM 2152 / NBRC 15305 / NCIMB 9373 / NCTC 2599 / NRRL B-3711) protein is Heptaprenylglyceryl phosphate synthase.